We begin with the raw amino-acid sequence, 420 residues long: Histidine--tRNA ligase (420 aa).

The protein belongs to the class-II aminoacyl-tRNA synthetase family. As to quaternary structure, homodimer.

It localises to the cytoplasm. It catalyses the reaction tRNA(His) + L-histidine + ATP = L-histidyl-tRNA(His) + AMP + diphosphate + H(+). This is Histidine--tRNA ligase from Staphylococcus saprophyticus subsp. saprophyticus (strain ATCC 15305 / DSM 20229 / NCIMB 8711 / NCTC 7292 / S-41).